The chain runs to 219 residues: Holliday junction branch migration complex subunit RuvA (219 aa).

The interval 1–71 (MISWIKGELV…EDSDMLFGFS (71 aa)) is domain I. A domain II region spans residues 72–150 (TKDQRDFFIQ…NKEIEKENLN (79 aa)). Residues 151-161 (INNFLEKNKDL) are flexible linker. Positions 161-219 (LDSIFKDIDLTLQSLNYSKKEIKNLFPKLINNIKNSSLEKESISFENLLKEAMNYLDHK) are domain III.

The protein belongs to the RuvA family. As to quaternary structure, homotetramer. Forms an RuvA(8)-RuvB(12)-Holliday junction (HJ) complex. HJ DNA is sandwiched between 2 RuvA tetramers; dsDNA enters through RuvA and exits via RuvB. An RuvB hexamer assembles on each DNA strand where it exits the tetramer. Each RuvB hexamer is contacted by two RuvA subunits (via domain III) on 2 adjacent RuvB subunits; this complex drives branch migration. In the full resolvosome a probable DNA-RuvA(4)-RuvB(12)-RuvC(2) complex forms which resolves the HJ.

The protein resides in the cytoplasm. The RuvA-RuvB-RuvC complex processes Holliday junction (HJ) DNA during genetic recombination and DNA repair, while the RuvA-RuvB complex plays an important role in the rescue of blocked DNA replication forks via replication fork reversal (RFR). RuvA specifically binds to HJ cruciform DNA, conferring on it an open structure. The RuvB hexamer acts as an ATP-dependent pump, pulling dsDNA into and through the RuvAB complex. HJ branch migration allows RuvC to scan DNA until it finds its consensus sequence, where it cleaves and resolves the cruciform DNA. The protein is Holliday junction branch migration complex subunit RuvA of Prochlorococcus marinus subsp. pastoris (strain CCMP1986 / NIES-2087 / MED4).